Reading from the N-terminus, the 376-residue chain is MSVNLSKNGAALQAAYKDVLDEKTKTDWALYTYEGNSNDIRLAETGDGGLEELVEELSSGKVMYAFCRVKDPNSGLPKFVLINWTGEGVKDARKGMCANHVSTMASFLKGAHVTINARAEEDVEPESIMEKVAKASGANYNFHKESNRGNEGPQGPVGSVYQKTNAMSEIKRVGKENFWAKAEKDEEERRIEEHRRANVEKDRLERERKEREQREAEERERRFRERSKEIDGHRKQQEEVEKQQTVPASQRSVNPREMFLQKERSLPESGSVSAQPEQFTASQQEEENIYQDATENQNIYEDTPQEDPVYETGVAEDSGMCARALYDYQAADDTEISFDPDDVIIQIEMIDDGWWRGVAPSGHFGMFPANYVELLE.

Residues 2 to 133 (SVNLSKNGAA…EPESIMEKVA (132 aa)) form the ADF-H domain. Residues 175 to 231 (KENFWAKAEKDEEERRIEEHRRANVEKDRLERERKEREQREAEERERRFRERSKEID) are a coiled coil. The span at 202-242 (DRLERERKEREQREAEERERRFRERSKEIDGHRKQQEEVEK) shows a compositional bias: basic and acidic residues. The interval 202 to 288 (DRLERERKER…FTASQQEEEN (87 aa)) is disordered. Residues 268–283 (ESGSVSAQPEQFTASQ) are compositionally biased toward polar residues. In terms of domain architecture, SH3 spans 317–376 (DSGMCARALYDYQAADDTEISFDPDDVIIQIEMIDDGWWRGVAPSGHFGMFPANYVELLE).

Belongs to the ABP1 family.

It localises to the cytoplasm. The protein resides in the cytoskeleton. It is found in the cell projection. Its subcellular location is the lamellipodium. The protein localises to the ruffle. It localises to the cell cortex. The protein resides in the cytosol. It is found in the synapse. Its subcellular location is the perikaryon. The protein localises to the neuron projection. It localises to the cell membrane. The protein resides in the cytoplasmic vesicle. It is found in the clathrin-coated vesicle membrane. Its subcellular location is the golgi apparatus membrane. The protein localises to the podosome. It localises to the early endosome. The protein resides in the dendrite. It is found in the postsynaptic density. In terms of biological role, adapter protein that binds F-actin and dynamin, and thereby plays a role in receptor-mediated endocytosis. Plays a role in the reorganization of the actin cytoskeleton, formation of cell projections, such as neurites, in neuron morphogenesis and synapse formation. Does not bind G-actin and promote actin polymerization by itself, but excerts its functions by interaction with other proteins. Required for the formation of organized podosome rosettes. The polypeptide is Drebrin-like protein B (dbnl-b) (Xenopus laevis (African clawed frog)).